Reading from the N-terminus, the 129-residue chain is Small ribosomal subunit protein uS11 (129 aa).

It belongs to the universal ribosomal protein uS11 family. As to quaternary structure, part of the 30S ribosomal subunit.

Located on the platform of the 30S subunit. The polypeptide is Small ribosomal subunit protein uS11 (Methanocaldococcus jannaschii (strain ATCC 43067 / DSM 2661 / JAL-1 / JCM 10045 / NBRC 100440) (Methanococcus jannaschii)).